A 387-amino-acid polypeptide reads, in one-letter code: Cytochrome b (387 aa).

8 consecutive transmembrane segments (helical) span residues Phe32–Met52, Trp76–Leu98, Leu113–Val133, Phe179–Ile199, Phe225–Phe245, Leu290–Ile310, Leu325–Ala345, and Leu353–Val373. Residues His82 and His96 each contribute to the heme b site. Heme b contacts are provided by His183 and His197.

Belongs to the cytochrome b family. The main subunits of complex b-c1 are: cytochrome b, cytochrome c1 and the Rieske protein. The cofactor is heme b.

Its subcellular location is the mitochondrion inner membrane. Component of the ubiquinol-cytochrome c reductase complex (complex III or cytochrome b-c1 complex) that is part of the mitochondrial respiratory chain. The b-c1 complex mediates electron transfer from ubiquinol to cytochrome c. Contributes to the generation of a proton gradient across the mitochondrial membrane that is then used for ATP synthesis. In Dictyostelium citrinum (Slime mold), this protein is Cytochrome b (cytB).